The primary structure comprises 236 residues: 2,3,4,5-tetrahydropyridine-2,6-dicarboxylate N-acetyltransferase (236 aa).

It belongs to the transferase hexapeptide repeat family. DapH subfamily.

It carries out the reaction (S)-2,3,4,5-tetrahydrodipicolinate + acetyl-CoA + H2O = L-2-acetamido-6-oxoheptanedioate + CoA. It participates in amino-acid biosynthesis; L-lysine biosynthesis via DAP pathway; LL-2,6-diaminopimelate from (S)-tetrahydrodipicolinate (acetylase route): step 1/3. Catalyzes the transfer of an acetyl group from acetyl-CoA to tetrahydrodipicolinate. The chain is 2,3,4,5-tetrahydropyridine-2,6-dicarboxylate N-acetyltransferase from Lactobacillus helveticus (strain DPC 4571).